We begin with the raw amino-acid sequence, 187 residues long: Photosystem I assembly protein Ycf4 (187 aa).

2 consecutive transmembrane segments (helical) span residues 23–43 and 70–90; these read INYF…IVGI and FYGI…ILGV.

The protein belongs to the Ycf4 family.

It is found in the plastid. The protein resides in the chloroplast thylakoid membrane. Functionally, seems to be required for the assembly of the photosystem I complex. The chain is Photosystem I assembly protein Ycf4 from Chara vulgaris (Common stonewort).